A 319-amino-acid chain; its full sequence is F-box only protein 8 (319 aa).

The F-box domain occupies Phe68 to Leu111. An SEC7 domain is found at Phe146 to Ser276.

May promote guanine-nucleotide exchange on an ARF. Promotes the activation of ARF through replacement of GDP with GTP (Potential). The sequence is that of F-box only protein 8 (FBXO8) from Homo sapiens (Human).